Reading from the N-terminus, the 263-residue chain is Nicotinamide riboside transporter PnuC (263 aa).

The Cytoplasmic portion of the chain corresponds to 1–40 (MQYGMDSFGLRGIPHQVFIKKKEGKIMSLAWWKRELFGGW). Residues 41-61 (THFEAVWLLMFLGIQAVVFVF) traverse the membrane as a helical segment. A topological domain (periplasmic) is located at residue Asn62. Residues 63-83 (PDSWLASVAAVTGILCVVFVG) traverse the membrane as a helical segment. The Cytoplasmic portion of the chain corresponds to 84-86 (KGK). Residues 87–107 (ISNYLFGLISVSLYAYVSYTF) traverse the membrane as a helical segment. The Periplasmic segment spans residues 108-109 (KL). The chain crosses the membrane as a helical span at residues 110 to 131 (YGEMMLNLLVYVPVQFVGFAMW). Residue Gln124 coordinates beta-nicotinamide D-riboside. Residues 132–155 (RKHMALGETAETEEVKAKALTVRQ) lie on the Cytoplasmic side of the membrane. Residues 156–177 (WLLVVAASVVGTSVYIEWLHHL) form a helical membrane-spanning segment. Residues 178-180 (GSA) are Periplasmic-facing. A helical membrane pass occupies residues 181–201 (LPTLDGVTVVVSIVAQVLMIL). Gln196 lines the beta-nicotinamide D-riboside pocket. Residues 202–205 (RYRE) lie on the Cytoplasmic side of the membrane. Residues 206–226 (QWALWIVVNILTISLWAVAWF) traverse the membrane as a helical segment. Beta-nicotinamide D-riboside is bound by residues Trp210 and Asn214. At 227–232 (KNGETS) the chain is on the periplasmic side. The chain crosses the membrane as a helical span at residues 233–253 (LPLLLMYVMYLCNSVYGYINW). Tyr242 provides a ligand contact to beta-nicotinamide D-riboside. The Cytoplasmic segment spans residues 254-263 (TKLVKRHSGQ).

Belongs to the nicotinamide ribonucleoside (NR) uptake permease (TC 4.B.1) family. In terms of assembly, homotrimer.

It localises to the cell inner membrane. Required for nicotinamide riboside transport across the inner membrane. The sequence is that of Nicotinamide riboside transporter PnuC from Neisseria mucosa (strain ATCC 25996 / DSM 4631 / NCTC 10774 / M26).